The chain runs to 46 residues: Esculentin-1R (46 aa).

An intrachain disulfide couples C40 to C46.

In terms of tissue distribution, expressed by the skin glands.

The protein localises to the secreted. In terms of biological role, shows antibacterial activity against representative Gram-negative and Gram-positive bacterial species, and hemolytic activity. The protein is Esculentin-1R of Pelophylax ridibundus (Marsh frog).